Reading from the N-terminus, the 446-residue chain is MLHPETSPGRGHLLAVLLALLGTAWAEVWPPQLQEQAPMAGALNRKESFLLLSLHNRLRSWVQPPAADMRRLDWSDSLAQLAQARAALCGTPTPSLASGLWRTLQVGWNMQLLPAGLVSFVEVVSLWFAEGQRYSHAAGECARNATCTHYTQLVWATSSQLGCGRHLCSAGQAAIEAFVCAYSPRGNWEVNGKTIVPYKKGAWCSLCTASVSGCFKAWDHAGGLCEVPRNPCRMSCQNHGRLNISTCHCHCPPGYTGRYCQVRCSLQCVHGRFREEECSCVCDIGYGGAQCATKVHFPFHTCDLRIDGDCFMVSSEADTYYRARMKCQRKGGVLAQIKSQKVQDILAFYLGRLETTNEVIDSDFETRNFWIGLTYKTAKDSFRWATGEHQAFTSFAFGQPDNHGFGNCVELQASAAFNWNDQRCKTRNRYICQFAQEHISRWGPGS.

A signal peptide spans 1 to 26; the sequence is MLHPETSPGRGHLLAVLLALLGTAWA. Residues 52–182 enclose the SCP domain; sequence LSLHNRLRSW…AAIEAFVCAY (131 aa). Residue Asn144 is glycosylated (N-linked (GlcNAc...) asparagine). The 34-residue stretch at 228-261 folds into the EGF-like domain; sequence PRNPCRMSCQNHGRLNISTCHCHCPPGYTGRYCQ. Cystine bridges form between Cys236/Cys249, Cys251/Cys260, Cys327/Cys432, and Cys408/Cys424. Positions 306–433 constitute a C-type lectin domain; the sequence is IDGDCFMVSS…CKTRNRYICQ (128 aa).

Post-translationally, N-glycosylated. As to expression, dectected in all cell lines tested and in peripheral blood cells.

It localises to the secreted. The protein localises to the endoplasmic reticulum. The protein resides in the golgi apparatus. It is found in the endosome. Its function is as follows. Binds polysaccharides in a Ca(2+)-independent manner with a preferentially binding to fucoidan, beta-glucans and galactans. This Homo sapiens (Human) protein is C-type lectin domain family 18 member A (CLEC18A).